We begin with the raw amino-acid sequence, 260 residues long: Hydroxyethylthiazole kinase 1 (260 aa).

Met39 contributes to the substrate binding site. ATP-binding residues include Arg115 and Thr160. Residue Gly187 participates in substrate binding.

This sequence belongs to the Thz kinase family. The cofactor is Mg(2+).

The catalysed reaction is 5-(2-hydroxyethyl)-4-methylthiazole + ATP = 4-methyl-5-(2-phosphooxyethyl)-thiazole + ADP + H(+). It functions in the pathway cofactor biosynthesis; thiamine diphosphate biosynthesis; 4-methyl-5-(2-phosphoethyl)-thiazole from 5-(2-hydroxyethyl)-4-methylthiazole: step 1/1. Functionally, catalyzes the phosphorylation of the hydroxyl group of 4-methyl-5-beta-hydroxyethylthiazole (THZ). The sequence is that of Hydroxyethylthiazole kinase 1 from Streptococcus pneumoniae (strain ATCC 700669 / Spain 23F-1).